A 263-amino-acid polypeptide reads, in one-letter code: Hydroxyethylthiazole kinase (263 aa).

Met-45 contacts substrate. Residues Arg-121 and Ser-167 each coordinate ATP. Gly-194 is a substrate binding site.

Belongs to the Thz kinase family. Mg(2+) serves as cofactor.

The catalysed reaction is 5-(2-hydroxyethyl)-4-methylthiazole + ATP = 4-methyl-5-(2-phosphooxyethyl)-thiazole + ADP + H(+). It functions in the pathway cofactor biosynthesis; thiamine diphosphate biosynthesis; 4-methyl-5-(2-phosphoethyl)-thiazole from 5-(2-hydroxyethyl)-4-methylthiazole: step 1/1. Its function is as follows. Catalyzes the phosphorylation of the hydroxyl group of 4-methyl-5-beta-hydroxyethylthiazole (THZ). This chain is Hydroxyethylthiazole kinase, found in Vibrio parahaemolyticus serotype O3:K6 (strain RIMD 2210633).